The following is a 280-amino-acid chain: Tryptophan 2,3-dioxygenase (280 aa).

Residues 47–51, tyrosine 109, and arginine 113 contribute to the substrate site; that span reads FVVQH. Histidine 236 contacts heme. A substrate-binding site is contributed by threonine 250.

This sequence belongs to the tryptophan 2,3-dioxygenase family. As to quaternary structure, homotetramer. The cofactor is heme.

It catalyses the reaction L-tryptophan + O2 = N-formyl-L-kynurenine. It participates in amino-acid degradation; L-tryptophan degradation via kynurenine pathway; L-kynurenine from L-tryptophan: step 1/2. Heme-dependent dioxygenase that catalyzes the oxidative cleavage of the L-tryptophan (L-Trp) pyrrole ring and converts L-tryptophan to N-formyl-L-kynurenine. Catalyzes the oxidative cleavage of the indole moiety. The chain is Tryptophan 2,3-dioxygenase from Serratia proteamaculans (strain 568).